A 362-amino-acid chain; its full sequence is Peptide chain release factor 1 (362 aa).

Glutamine 237 carries the N5-methylglutamine modification. Residues 282–296 (QQEEDKRRAEADSTR) are compositionally biased toward basic and acidic residues. The disordered stretch occupies residues 282–304 (QQEEDKRRAEADSTRRSILSTGD).

It belongs to the prokaryotic/mitochondrial release factor family. Post-translationally, methylated by PrmC. Methylation increases the termination efficiency of RF1.

It is found in the cytoplasm. Its function is as follows. Peptide chain release factor 1 directs the termination of translation in response to the peptide chain termination codons UAG and UAA. The sequence is that of Peptide chain release factor 1 from Tolumonas auensis (strain DSM 9187 / NBRC 110442 / TA 4).